Consider the following 302-residue polypeptide: Nucleotide-binding protein BceJ2315_08000 (302 aa).

8–15 (GISGSGKS) lines the ATP pocket. Residue 57 to 60 (DARS) coordinates GTP.

It belongs to the RapZ-like family.

Functionally, displays ATPase and GTPase activities. The sequence is that of Nucleotide-binding protein BceJ2315_08000 from Burkholderia cenocepacia (strain ATCC BAA-245 / DSM 16553 / LMG 16656 / NCTC 13227 / J2315 / CF5610) (Burkholderia cepacia (strain J2315)).